Consider the following 507-residue polypeptide: Maturase K (507 aa).

It belongs to the intron maturase 2 family. MatK subfamily.

It is found in the plastid. The protein resides in the chloroplast. Its function is as follows. Usually encoded in the trnK tRNA gene intron. Probably assists in splicing its own and other chloroplast group II introns. This Lens culinaris (Lentil) protein is Maturase K.